Reading from the N-terminus, the 445-residue chain is Beclin-1 (445 aa).

The BH3 signature appears at 103 to 122; it reads TMENLSRRLKVTGDLFDIMS. Residues 137–264 adopt a coiled-coil conformation; that stretch reads DTLLDQLDTQ…QLDKLKKTNV (128 aa). An evolutionary conserved domain (ECD) region spans residues 240 to 445; sequence DDLKSVENQM…AWVSSQFYNK (206 aa). The required for membrane-association stretch occupies residues 420–445; the sequence is WTKALKFMLTNLKWGLAWVSSQFYNK.

This sequence belongs to the beclin family. As to quaternary structure, component of the PI3K (PI3KC3/PI3K-III/class III phosphatidylinositol 3-kinase) complex. Post-translationally, may be proteolytically processed by caspases; the C-terminal fragment(s) may induce apoptosis.

Its subcellular location is the cytoplasm. The protein localises to the golgi apparatus. The protein resides in the trans-Golgi network membrane. It localises to the endosome membrane. It is found in the endoplasmic reticulum membrane. Its subcellular location is the mitochondrion membrane. The protein localises to the cytoplasmic vesicle. The protein resides in the autophagosome. Its function is as follows. Plays a central role in autophagy. Acts as core subunit of different PI3K complex forms that mediate formation of phosphatidylinositol 3-phosphate and are believed to play a role in multiple membrane trafficking pathways: PI3KC3-C1 is involved in initiation of autophagosomes and PI3KC3-C2 in maturation of autophagosomes and endocytosis. Involved in regulation of degradative endocytic trafficking and required for the abscission step in cytokinesis, probably in the context of PI3KC3-C2. Essential for the formation of PI3KC3-C2 but not PI3KC3-C1 PI3K complex forms. Involved in endocytosis including endosome formation in neuronal cells. This is Beclin-1 (becn1) from Xenopus tropicalis (Western clawed frog).